The sequence spans 40 residues: MADTTGRIPLWLIGTVAGIPVIGSVGVFFYGSYSGLGSSL.

Residues 8–28 (IPLWLIGTVAGIPVIGSVGVF) traverse the membrane as a helical segment.

It belongs to the PsbJ family. As to quaternary structure, PSII is composed of 1 copy each of membrane proteins PsbA, PsbB, PsbC, PsbD, PsbE, PsbF, PsbH, PsbI, PsbJ, PsbK, PsbL, PsbM, PsbT, PsbX, PsbY, PsbZ, Psb30/Ycf12, at least 3 peripheral proteins of the oxygen-evolving complex and a large number of cofactors. It forms dimeric complexes.

The protein localises to the plastid. It is found in the chloroplast thylakoid membrane. Functionally, one of the components of the core complex of photosystem II (PSII). PSII is a light-driven water:plastoquinone oxidoreductase that uses light energy to abstract electrons from H(2)O, generating O(2) and a proton gradient subsequently used for ATP formation. It consists of a core antenna complex that captures photons, and an electron transfer chain that converts photonic excitation into a charge separation. The polypeptide is Photosystem II reaction center protein J (Acorus calamus (Sweet flag)).